Reading from the N-terminus, the 361-residue chain is S-adenosylmethionine:tRNA ribosyltransferase-isomerase (361 aa).

Belongs to the QueA family. As to quaternary structure, monomer.

The protein localises to the cytoplasm. The enzyme catalyses 7-aminomethyl-7-carbaguanosine(34) in tRNA + S-adenosyl-L-methionine = epoxyqueuosine(34) in tRNA + adenine + L-methionine + 2 H(+). It functions in the pathway tRNA modification; tRNA-queuosine biosynthesis. Transfers and isomerizes the ribose moiety from AdoMet to the 7-aminomethyl group of 7-deazaguanine (preQ1-tRNA) to give epoxyqueuosine (oQ-tRNA). This is S-adenosylmethionine:tRNA ribosyltransferase-isomerase from Methylocella silvestris (strain DSM 15510 / CIP 108128 / LMG 27833 / NCIMB 13906 / BL2).